We begin with the raw amino-acid sequence, 199 residues long: uncharacterized protein (199 aa).

The first 28 residues, 1–28, serve as a signal peptide directing secretion; that stretch reads MKKLATVGSLIVTSTLVFSSMPFQNAHA.

It localises to the secreted. This is an uncharacterized protein from Staphylococcus aureus (strain NCTC 8325 / PS 47).